The sequence spans 57 residues: Large ribosomal subunit protein bL32 (57 aa).

The segment covering 1 to 16 (MAVQKSRKTRSKRGMR) has biased composition (basic residues). Residues 1–45 (MAVQKSRKTRSKRGMRRSHDALTAPAQLSVDATSGETHRRHHMTA) form a disordered region.

It belongs to the bacterial ribosomal protein bL32 family.

The polypeptide is Large ribosomal subunit protein bL32 (Psychromonas ingrahamii (strain DSM 17664 / CCUG 51855 / 37)).